A 444-amino-acid polypeptide reads, in one-letter code: Ribulose bisphosphate carboxylase large chain (444 aa).

Lysine 5 is modified (N6,N6,N6-trimethyllysine). Substrate-binding residues include asparagine 114 and threonine 164. Lysine 166 acts as the Proton acceptor in catalysis. Position 168 (lysine 168) interacts with substrate. Residues lysine 192, aspartate 194, and glutamate 195 each coordinate Mg(2+). Lysine 192 carries the post-translational modification N6-carboxylysine. Histidine 285 serves as the catalytic Proton acceptor. The substrate site is built by arginine 286, histidine 318, and serine 370.

It belongs to the RuBisCO large chain family. Type I subfamily. In terms of assembly, heterohexadecamer of 8 large chains and 8 small chains; disulfide-linked. The disulfide link is formed within the large subunit homodimers. Requires Mg(2+) as cofactor. In terms of processing, the disulfide bond which can form in the large chain dimeric partners within the hexadecamer appears to be associated with oxidative stress and protein turnover.

It is found in the plastid. The protein resides in the chloroplast. It carries out the reaction 2 (2R)-3-phosphoglycerate + 2 H(+) = D-ribulose 1,5-bisphosphate + CO2 + H2O. It catalyses the reaction D-ribulose 1,5-bisphosphate + O2 = 2-phosphoglycolate + (2R)-3-phosphoglycerate + 2 H(+). In terms of biological role, ruBisCO catalyzes two reactions: the carboxylation of D-ribulose 1,5-bisphosphate, the primary event in carbon dioxide fixation, as well as the oxidative fragmentation of the pentose substrate in the photorespiration process. Both reactions occur simultaneously and in competition at the same active site. The protein is Ribulose bisphosphate carboxylase large chain of Ginkgo biloba (Ginkgo).